The sequence spans 346 residues: KH domain-containing, RNA-binding, signal transduction-associated protein 3 (346 aa).

The tract at residues 1 to 160 is involved in homodimerization; it reads MEEKYLPELM…IKKFLIPDYN (160 aa). Lys-4 participates in a covalent cross-link: Glycyl lysine isopeptide (Lys-Gly) (interchain with G-Cter in SUMO2). The KH domain occupies 61–127; it reads LIPVKQFPKF…AKYFHLNDDL (67 aa). Disordered stretches follow at residues 212 to 266 and 317 to 346; these read RPVA…QETY and GQEE…YGRY. Over residues 253-262 the composition is skewed to pro residues; it reads GYRPPPPPPT.

This sequence belongs to the KHDRBS family. As to quaternary structure, self-associates to form homooligomers; dimerization increases RNA affinity. Interacts with KHDRBS2/SLM-1. Interacts with KHDRBS1/SAM68; heterooligomer formation of KHDRBS family proteins may modulate RNA substrate specificity. Interacts with the splicing regulatory proteins SFRS9, SAFB and YTHDC1. Interacts with HNRPL, RBMX, p85 subunit of PI3-kinase, SERPINB5. In terms of processing, phosphorylated on tyrosine residues by PTK6. Highly expressed in testis and brain. In adult cerebellum expressed predominantly in internal granular layer interneurons and in hippocampus is exclusively expressed in CA neurons; expression is restricted to neuronal subpopulations largely non-overlapping with expression of KHDRBS2/SLM-1.

It localises to the nucleus. In terms of biological role, RNA-binding protein that plays a role in the regulation of alternative splicing and influences mRNA splice site selection and exon inclusion. Binds preferentially to the 5'-[AU]UAAA-3' motif in vitro. Binds optimally to RNA containing 5'-[AU]UAA-3' as a bipartite motif spaced by more than 15 nucleotides. Binds poly(A). RNA-binding abilities are down-regulated by tyrosine kinase PTK6. Involved in splice site selection of vascular endothelial growth factor. In vitro regulates CD44 alternative splicing by direct binding to purine-rich exonic enhancer. Can regulate alternative splicing of neurexins NRXN1-3 in the laminin G-like domain 6 containing the evolutionary conserved neurexin alternative spliced segment 4 (AS4) involved in neurexin selective targeting to postsynaptic partners such as neuroligins and LRRTM family members. High concentrations in forebrain structures block splicing inclusion of NRXN1-3 AS4 exons while low concentrations favor their inclusion. Targeted, cell-type specific splicing regulation of NRXN1 at AS4 is involved in neuronal glutamatergic synapse function and plasticity and is linked to behavioral aspects. Regulates expression of KHDRBS2/SLIM-1 in defined neuron populations in the hippocampus by modifying its alternative splicing resulting in a transcript predicted to undergo nonsense-mediated decay. Can bind FABP9 mRNA. May play a role as a negative regulator of cell growth. Inhibits cell proliferation. The sequence is that of KH domain-containing, RNA-binding, signal transduction-associated protein 3 (Khdrbs3) from Mus musculus (Mouse).